The following is a 414-amino-acid chain: MAEICCEEAMSPPATATAAVAAAVSASAAAAVSSAIDRRRRRMEMRRIRIASDLELQAGEDGRPGKRQRLARTASGAPRPDEDSASERPSCGRTEEFPRYGVTAVCGRRREMEDAVSIRPDFLPASGKFHFYGVFDGHGCSHVATTCQDRMHEIVAEEHNKGASGEVAPWRDVMEKSFARMDGEVGNRASTRSDDEPACPCEQQTPSRRDHAGSTAVVAVVSPTQVVVANAGDSRAVISRAGVPVALSVDHKPDRPDELERIEAAGGRVIYWDGARVLGVLAMSRAIGDGYLKPYVTSEPEVTVTERTDDDECLILASDGLWDVVTNEMACEVVRACFHNNGPPAPAARPSGVPSSAEAAETENGGAASVKGISKAESSDKACSDAAMLLTKLALARRSADNVSVVVVDLRRGL.

The helical transmembrane segment at 15 to 37 (TATAAVAAAVSASAAAAVSSAID) threads the bilayer. Positions 56–95 (LQAGEDGRPGKRQRLARTASGAPRPDEDSASERPSCGRTE) are disordered. In terms of domain architecture, PPM-type phosphatase spans 99–410 (RYGVTAVCGR…DNVSVVVVDL (312 aa)). 2 residues coordinate Mn(2+): aspartate 136 and glycine 137. Residues 186–195 (GNRASTRSDD) show a composition bias toward basic and acidic residues. Positions 186–212 (GNRASTRSDDEPACPCEQQTPSRRDHA) are disordered. Aspartate 319 contacts Mn(2+). A disordered region spans residues 345-372 (APAARPSGVPSSAEAAETENGGAASVKG). Residues 355–369 (SSAEAAETENGGAAS) show a composition bias toward low complexity. Aspartate 401 contacts Mn(2+).

The protein belongs to the PP2C family. Mg(2+) is required as a cofactor. The cofactor is Mn(2+).

Its subcellular location is the membrane. It catalyses the reaction O-phospho-L-seryl-[protein] + H2O = L-seryl-[protein] + phosphate. It carries out the reaction O-phospho-L-threonyl-[protein] + H2O = L-threonyl-[protein] + phosphate. This chain is Probable protein phosphatase 2C 9, found in Oryza sativa subsp. japonica (Rice).